A 281-amino-acid chain; its full sequence is Elongation factor Ts (281 aa).

The interval 80–83 (TDFV) is involved in Mg(2+) ion dislocation from EF-Tu.

The protein belongs to the EF-Ts family.

The protein resides in the cytoplasm. Associates with the EF-Tu.GDP complex and induces the exchange of GDP to GTP. It remains bound to the aminoacyl-tRNA.EF-Tu.GTP complex up to the GTP hydrolysis stage on the ribosome. The protein is Elongation factor Ts of Vibrio campbellii (strain ATCC BAA-1116).